A 337-amino-acid polypeptide reads, in one-letter code: Interferon gamma receptor 2 (337 aa).

The signal sequence occupies residues methionine 1–alanine 21. Residues serine 28–glutamine 247 are Extracellular-facing. The 99-residue stretch at proline 31–methionine 129 folds into the Fibronectin type-III 1 domain. N-linked (GlcNAc...) asparagine glycosylation is found at asparagine 56 and asparagine 85. A disulfide bridge connects residues cysteine 86 and cysteine 94. N-linked (GlcNAc...) asparagine glycosylation is found at asparagine 110, asparagine 137, asparagine 219, and asparagine 231. The Fibronectin type-III 2 domain occupies proline 142 to aspartate 240. A disulfide bridge connects residues cysteine 209 and cysteine 234. Residues valine 248–phenylalanine 268 form a helical membrane-spanning segment. Residues leucine 269–leucine 337 are Cytoplasmic-facing. The Dileucine internalization motif motif lies at leucine 276 to isoleucine 277.

The protein belongs to the type II cytokine receptor family. In terms of assembly, heterodimer with IFNGR1, to form the IFNG receptor complex. Interacts (via intracellular domain) with JAK2. As to expression, expressed in T-cells (at protein level).

It localises to the cell membrane. The protein localises to the cytoplasmic vesicle membrane. It is found in the golgi apparatus membrane. The protein resides in the endoplasmic reticulum membrane. Its subcellular location is the cytoplasm. In terms of biological role, associates with IFNGR1 to form a receptor for the cytokine interferon gamma (IFNG). Ligand binding stimulates activation of the JAK/STAT signaling pathway. Required for signal transduction in contrast to other receptor subunit responsible for ligand binding. The polypeptide is Interferon gamma receptor 2 (Homo sapiens (Human)).